The following is a 259-amino-acid chain: Ubiquinol-cytochrome c reductase complex assembly factor 1 (259 aa).

This sequence belongs to the CBP3 family. Interacts with sloth1; the interaction is probably involved in the assembly and stability of the mitochondrial ubiquinol-cytochrome c reductase complex.

Its subcellular location is the mitochondrion inner membrane. Functionally, required for the assembly of the ubiquinol-cytochrome c reductase complex (mitochondrial respiratory chain complex III or cytochrome b-c1 complex). May be involved in cytochrome b translation and/or stability. The chain is Ubiquinol-cytochrome c reductase complex assembly factor 1 from Drosophila melanogaster (Fruit fly).